A 500-amino-acid chain; its full sequence is Plasma protease C1 inhibitor (500 aa).

Residues 1–22 (MASRLTLLTLLLLLLAGDRASS) form the signal peptide. The segment covering 20–31 (ASSNPNATSSSS) has biased composition (low complexity). Positions 20-43 (ASSNPNATSSSSQDPESLQDRGEG) are disordered. Asparagine 25 is a glycosylation site (N-linked (GlcNAc...) (complex) asparagine). 2 O-linked (GalNAc...) threonine glycosylation sites follow: threonine 47 and threonine 48. Serine 64 carries an O-linked (GalNAc...) serine glycan. The interval 65-118 (LPTTNSTTNSATKITANTTDEPTTQPTTEPTTQPTIQPTQPTTQLPTDSPTQPT) is disordered. Residues 67–118 (TTNSTTNSATKITANTTDEPTTQPTTEPTTQPTIQPTQPTTQLPTDSPTQPT) show a composition bias toward low complexity. Asparagine 69 carries N-linked (GlcNAc...) asparagine glycosylation. O-linked (GalNAc...) threonine glycosylation occurs at threonine 71. N-linked (GlcNAc...) asparagine glycosylation occurs at asparagine 81. Residues threonine 83, threonine 88, threonine 92, and threonine 96 are each glycosylated (O-linked (GalNAc...) threonine). Repeat copies occupy residues 85–88 (EPTT), 89–92 (QPTT), 93–96 (EPTT), 97–100 (QPTI), 101–104 (QPTQ), 105–108 (PTTQ), and 116–119 (QPTT). The tract at residues 85 to 119 (EPTTQPTTEPTTQPTIQPTQPTTQLPTDSPTQPTT) is 7 X 4 AA tandem repeats of [QE]-P-T-[TQ]. 2 disulfide bridges follow: cysteine 123–cysteine 428 and cysteine 130–cysteine 205. Asparagine 238 and asparagine 253 each carry an N-linked (GlcNAc...) (complex) asparagine glycan. The N-linked (GlcNAc...) asparagine; in variant TA glycan is linked to asparagine 272. Asparagine 352 carries an N-linked (GlcNAc...) (complex) asparagine glycan.

This sequence belongs to the serpin family. In terms of assembly, interacts with MASP1. As to quaternary structure, (Microbial infection) Binds to E.coli stcE which allows localization of SERPING1 to cell membranes thus protecting the bacteria against complement-mediated lysis. Highly glycosylated (49%) with N- and O-glycosylation. O-glycosylated with core 1 or possibly core 8 glycans. N-glycan heterogeneity at Asn-25: Hex5HexNAc4 (minor), dHex1Hex5HexNAc4 (minor), Hex6HexNAc5 (major) and dHex1Hex6HexNAc5 (minor). Post-translationally, cleaved by C1S in vitro. In terms of processing, (Microbial infection) Can be proteolytically cleaved by E.coli stcE.

It is found in the secreted. Functionally, serine protease inhibitor, which acrs as a regulator of the classical complement pathway. Forms a proteolytically inactive stoichiometric complex with the C1r or C1s proteases. May also regulate blood coagulation, fibrinolysis and the generation of kinins. Very efficient inhibitor of FXIIa. Inhibits chymotrypsin and kallikrein. The protein is Plasma protease C1 inhibitor (SERPING1) of Homo sapiens (Human).